Here is a 606-residue protein sequence, read N- to C-terminus: 4-hydroxy-3-methylbut-2-en-1-yl diphosphate synthase (flavodoxin) (606 aa).

[4Fe-4S] cluster contacts are provided by cysteine 513, cysteine 516, cysteine 547, and glutamate 554.

Belongs to the IspG family. [4Fe-4S] cluster is required as a cofactor.

The catalysed reaction is (2E)-4-hydroxy-3-methylbut-2-enyl diphosphate + oxidized [flavodoxin] + H2O + 2 H(+) = 2-C-methyl-D-erythritol 2,4-cyclic diphosphate + reduced [flavodoxin]. Its pathway is isoprenoid biosynthesis; isopentenyl diphosphate biosynthesis via DXP pathway; isopentenyl diphosphate from 1-deoxy-D-xylulose 5-phosphate: step 5/6. Its function is as follows. Converts 2C-methyl-D-erythritol 2,4-cyclodiphosphate (ME-2,4cPP) into 1-hydroxy-2-methyl-2-(E)-butenyl 4-diphosphate. This is 4-hydroxy-3-methylbut-2-en-1-yl diphosphate synthase (flavodoxin) from Chlamydia abortus (strain DSM 27085 / S26/3) (Chlamydophila abortus).